The sequence spans 158 residues: Coenzyme F420 hydrogenase subunit delta (158 aa).

This sequence belongs to the peptidase A31 family.

The chain is Coenzyme F420 hydrogenase subunit delta (frhD) from Methanothermobacter thermautotrophicus (strain ATCC 29096 / DSM 1053 / JCM 10044 / NBRC 100330 / Delta H) (Methanobacterium thermoautotrophicum).